Reading from the N-terminus, the 367-residue chain is Cell-death-related nuclease 7 (367 aa).

Positions 1-18 (MRLYFVLIFSVIFTTGNG) are cleaved as a signal peptide. Asn-253 carries an N-linked (GlcNAc...) asparagine glycan.

The protein belongs to the DNase II family.

This Caenorhabditis elegans protein is Cell-death-related nuclease 7 (crn-7).